A 194-amino-acid chain; its full sequence is Xanthine phosphoribosyltransferase (194 aa).

Positions 20 and 27 each coordinate xanthine. Residue 128-132 (ANGQA) participates in 5-phospho-alpha-D-ribose 1-diphosphate binding. Position 156 (K156) interacts with xanthine.

This sequence belongs to the purine/pyrimidine phosphoribosyltransferase family. Xpt subfamily. Homodimer.

It is found in the cytoplasm. The enzyme catalyses XMP + diphosphate = xanthine + 5-phospho-alpha-D-ribose 1-diphosphate. The protein operates within purine metabolism; XMP biosynthesis via salvage pathway; XMP from xanthine: step 1/1. Functionally, converts the preformed base xanthine, a product of nucleic acid breakdown, to xanthosine 5'-monophosphate (XMP), so it can be reused for RNA or DNA synthesis. In Oceanobacillus iheyensis (strain DSM 14371 / CIP 107618 / JCM 11309 / KCTC 3954 / HTE831), this protein is Xanthine phosphoribosyltransferase.